A 234-amino-acid polypeptide reads, in one-letter code: Phosphoribosylaminoimidazole-succinocarboxamide synthase (234 aa).

This sequence belongs to the SAICAR synthetase family.

It catalyses the reaction 5-amino-1-(5-phospho-D-ribosyl)imidazole-4-carboxylate + L-aspartate + ATP = (2S)-2-[5-amino-1-(5-phospho-beta-D-ribosyl)imidazole-4-carboxamido]succinate + ADP + phosphate + 2 H(+). The protein operates within purine metabolism; IMP biosynthesis via de novo pathway; 5-amino-1-(5-phospho-D-ribosyl)imidazole-4-carboxamide from 5-amino-1-(5-phospho-D-ribosyl)imidazole-4-carboxylate: step 1/2. The sequence is that of Phosphoribosylaminoimidazole-succinocarboxamide synthase from Clostridium botulinum (strain ATCC 19397 / Type A).